The sequence spans 119 residues: UPF0145 protein Bcep18194_B0595 (119 aa).

Belongs to the UPF0145 family.

In Burkholderia lata (strain ATCC 17760 / DSM 23089 / LMG 22485 / NCIMB 9086 / R18194 / 383), this protein is UPF0145 protein Bcep18194_B0595.